The sequence spans 598 residues: EF-hand and coiled-coil domain-containing protein 1 (598 aa).

Residues 1–22 are disordered; the sequence is MEPVSTGAEAGMEGAGGDPYRR. The region spanning 54–89 is the EF-hand domain; that stretch reads GLDQYLQEVFHHLDCRGAGRLPRADFRALCAVLGLR. Disordered regions lie at residues 96–127, 175–198, and 326–411; these read AGQA…DTDE, RLRR…PDCE, and YRSE…KKTP. The span at 175–185 shows a compositional bias: basic residues; it reads RLRRPRRRRRP. The stretch at 196–303 forms a coiled coil; sequence DCERVARLEE…RSLHRVRELE (108 aa). Basic and acidic residues predominate over residues 343 to 359; it reads PGDKSNEPEDAGTRDPD. Over residues 394–404 the composition is skewed to acidic residues; sequence SDEEEVEEERW. Residues 479–533 are a coiled coil; that stretch reads TSEEEAELQQKVEENEHLRLELQMVETERVRLSLLEEKLVDVLQLLQRLRDLNIS.

The chain is EF-hand and coiled-coil domain-containing protein 1 (EFCC1) from Homo sapiens (Human).